A 336-amino-acid polypeptide reads, in one-letter code: Ephrin-B2 (336 aa).

A signal peptide spans Met-1–Ser-28. Topologically, residues Arg-29–Ala-232 are extracellular. The Ephrin RBD domain occupies Ile-31–Val-167. Residue Asn-39 is glycosylated (N-linked (GlcNAc...) asparagine). Disulfide bonds link Cys-65-Cys-104 and Cys-92-Cys-156. Asn-142 carries an N-linked (GlcNAc...) asparagine glycan. A disordered region spans residues Asp-170–Ala-216. Residues Asn-193 to Ala-216 show a composition bias toward polar residues. A helical transmembrane segment spans residues Gly-233–Leu-253. The Cytoplasmic portion of the chain corresponds to Lys-254–Val-336. Ser-263 is modified (phosphoserine). Thr-277 carries the phosphothreonine modification. At Arg-280 the chain carries Omega-N-methylarginine. Residues Tyr-334–Val-336 carry the PDZ-binding motif.

Belongs to the ephrin family. Interacts with PDZRN3. Binds to the ephrin receptor EPHA3, EPHA4 and EPHB4. Post-translationally, inducible phosphorylation of tyrosine residues in the cytoplasmic domain. In terms of tissue distribution, expressed in inner and outer pillar cells of the organ of Corti (at protein level). Expressed on lateral floor plate cells, specifically on commissural axon segments that have passed through the floor plate. Expressed in cells of the retinal ganglion cell layer during retinal axon guidance to the optic disk. Expressed in myogenic progenitor cells.

It localises to the cell membrane. The protein resides in the cell junction. It is found in the adherens junction. Its function is as follows. Cell surface transmembrane ligand for Eph receptors, a family of receptor tyrosine kinases which are crucial for migration, repulsion and adhesion during neuronal, vascular and epithelial development. Binds promiscuously Eph receptors residing on adjacent cells, leading to contact-dependent bidirectional signaling into neighboring cells. The signaling pathway downstream of the receptor is referred to as forward signaling while the signaling pathway downstream of the ephrin ligand is referred to as reverse signaling. Binds to receptor tyrosine kinase including EPHA4, EPHA3 and EPHB4. Together with EPHB4 plays a central role in heart morphogenesis and angiogenesis through regulation of cell adhesion and cell migration. EPHB4-mediated forward signaling controls cellular repulsion and segregation from EFNB2-expressing cells. May play a role in constraining the orientation of longitudinally projecting axons. This Mus musculus (Mouse) protein is Ephrin-B2 (Efnb2).